The sequence spans 221 residues: UPF0502 protein PSPTO_2686 (221 aa).

It belongs to the UPF0502 family.

This Pseudomonas syringae pv. tomato (strain ATCC BAA-871 / DC3000) protein is UPF0502 protein PSPTO_2686.